The primary structure comprises 376 residues: MSDTLDLAQELIRRRSVTPEDAGCQQLIAERLAPLGFEAHHLRFEDVDNLWLRRGSEGPVLAFAGHTDVVPTGPVEKWSSDPFQPQIRNGQLYGRGAADMKSSIAAFVIACEAFLKDHPDHKGSIALLITSDEEGPSVNGTVKVVEWLEARGEKITWALVGEPSSTERLGDVIKNGRRGSLSGVLRVRGQQGHVAYPHLADNPVHRALPALAELAAIQWDEGNEHFPPTSFQISNIHAGTGAENVIPGELEVMFNLRFSTEQTDEGIRTRVHAVLDAHGLDYELSWRLSGHPFLTAEGELVEAASAAIREVMGLDTELSTAGGTSDGRFIAPTGAQVVELGPLNASIHKIDEHVRIEDLDALSRIYTGILKRLLVE.

His-66 provides a ligand contact to Zn(2+). Residue Asp-68 is part of the active site. Residue Asp-99 coordinates Zn(2+). The Proton acceptor role is filled by Glu-133. Glu-134, Glu-162, and His-348 together coordinate Zn(2+).

Belongs to the peptidase M20A family. DapE subfamily. In terms of assembly, homodimer. Zn(2+) is required as a cofactor. Co(2+) serves as cofactor.

The catalysed reaction is N-succinyl-(2S,6S)-2,6-diaminopimelate + H2O = (2S,6S)-2,6-diaminopimelate + succinate. It functions in the pathway amino-acid biosynthesis; L-lysine biosynthesis via DAP pathway; LL-2,6-diaminopimelate from (S)-tetrahydrodipicolinate (succinylase route): step 3/3. Its function is as follows. Catalyzes the hydrolysis of N-succinyl-L,L-diaminopimelic acid (SDAP), forming succinate and LL-2,6-diaminopimelate (DAP), an intermediate involved in the bacterial biosynthesis of lysine and meso-diaminopimelic acid, an essential component of bacterial cell walls. This is Succinyl-diaminopimelate desuccinylase from Thioalkalivibrio sulfidiphilus (strain HL-EbGR7).